Here is a 632-residue protein sequence, read N- to C-terminus: Palmitoyltransferase ZDHHC17 (632 aa).

Residues 1-304 (MQREEGFNTK…LKADKEFRQK (304 aa)) are Cytoplasmic-facing. Residues 11–305 (MADGPDEYET…KADKEFRQKV (295 aa)) form a necessary and sufficient for interaction with DNAJC5 and SNAP25 region. 7 ANK repeats span residues 51–86 (THID…VRQP), 89–118 (ENVT…IVDQ), 123–152 (LNST…DPSL), 156–185 (EGCS…DVDM), 189–219 (NGMT…SVNL), 224–253 (HKNT…NVDA), and 257–286 (KGES…AKGY). The next 2 membrane-spanning stretches (helical) occupy residues 305–325 (VMLG…DLDI) and 326–346 (DSWL…QFLS). Residues 347-357 (KSFFDHSMHSA) lie on the Cytoplasmic side of the membrane. A helical membrane pass occupies residues 358 to 378 (LPLGIYLATKFWMYVTWFFWF). The Lumenal portion of the chain corresponds to 379 to 381 (WND). A helical membrane pass occupies residues 382-402 (LNFLFIHLPFLANSVALFYNF). The Cytoplasmic portion of the chain corresponds to 403-480 (GKSWKSDPGI…GNCVGAGNHR (78 aa)). In terms of domain architecture, DHHC spans 437 to 487 (IFCSTCLIRKPVRSKHCGVCNRCIAKFDHHCPWVGNCVGAGNHRYFMGYLF). Residue Cys-467 is the S-palmitoyl cysteine intermediate of the active site. Residues 481 to 501 (YFMGYLFFLLFMICWMIYGCV) traverse the membrane as a helical segment. Over 502–529 (SYWGLHCETTYTKDGFWTYITQIATCSP) the chain is Lumenal. A helical transmembrane segment spans residues 530-550 (WMFWMFLNSVFHFLWVAVLLM). The Cytoplasmic portion of the chain corresponds to 551-632 (CQLYQITCLG…QISGSGYQLV (82 aa)).

It belongs to the DHHC palmitoyltransferase family. AKR/ZDHHC17 subfamily. Interacts (via ANK repeats) with numerous proteins (via the consensus sequence motif [VIAP]-[VIT]-x-x-Q-P). Interacts (via ANK repeats) with CLIP3. Interacts (via ANK repeats) with HTT. Interacts (via ANK repeats) with DNAJC5 (via C-terminus). Interacts (via ANK repeats) with MAP6. Interacts (via ANK repeats) with SNAP23. Interacts (via ANK repeats) with SNAP25. Interacts (via ANK repeats) with EVL. Interacts with SPRED1 and SPRED3. Interacts with GPM6A and OPTN. May interact (via ANK repeats) with SPRED2. May interact with NTRK1; may regulate its localization and function. Autopalmitoylated. Autopalmitoylation has a regulatory role in ZDHHC17-mediated Mg(2+) transport. As to expression, expressed in liver, testis, kidney, heart, pancreas and brain. Highest expression was seen in the brain. Localized predominantly in the perinuclear regions of neurons from the cortex, striatum and hippocampus. Colocalized with HTT in the medium spiny neurons of the striatum and the spiny neurons that project into the globus pallidus.

It localises to the golgi apparatus membrane. The protein localises to the cytoplasmic vesicle membrane. Its subcellular location is the presynaptic cell membrane. It carries out the reaction L-cysteinyl-[protein] + hexadecanoyl-CoA = S-hexadecanoyl-L-cysteinyl-[protein] + CoA. It catalyses the reaction L-cysteinyl-[protein] + tetradecanoyl-CoA = S-tetradecanoyl-L-cysteinyl-[protein] + CoA. The catalysed reaction is L-cysteinyl-[protein] + octadecanoyl-CoA = S-octadecanoyl-L-cysteinyl-[protein] + CoA. Functionally, palmitoyltransferase that catalyzes the addition of palmitate onto various protein substrates and is involved in a variety of cellular processes. Has no stringent fatty acid selectivity and in addition to palmitate can also transfer onto target proteins myristate from tetradecanoyl-CoA and stearate from octadecanoyl-CoA. Palmitoyltransferase specific for a subset of neuronal proteins, including SNAP25, DLG4/PSD95, GAD2, SYT1 and HTT. Also palmitoylates neuronal protein GPM6A as well as SPRED1 and SPRED3. Could also play a role in axonogenesis through the regulation of NTRK1 and the downstream ERK1/ERK2 signaling cascade. May be involved in the sorting or targeting of critical proteins involved in the initiating events of endocytosis at the plasma membrane. May play a role in Mg(2+) transport. Could also palmitoylate DNAJC5 and regulate its localization to the Golgi membrane. Palmitoylates CASP6, thereby preventing its dimerization and subsequent activation. This Mus musculus (Mouse) protein is Palmitoyltransferase ZDHHC17.